The chain runs to 479 residues: Cardiolipin synthase A (479 aa).

Helical transmembrane passes span Phe8 to Val28 and Ile38 to Phe58. PLD phosphodiesterase domains follow at residues Val218 to Tyr245 and Gln392 to Ser419. Catalysis depends on residues His223, Lys225, Asp230, His397, Lys399, and Asp404.

It belongs to the phospholipase D family. Cardiolipin synthase subfamily. ClsA sub-subfamily.

The protein localises to the cell inner membrane. It catalyses the reaction 2 a 1,2-diacyl-sn-glycero-3-phospho-(1'-sn-glycerol) = a cardiolipin + glycerol. Catalyzes the reversible phosphatidyl group transfer from one phosphatidylglycerol molecule to another to form cardiolipin (CL) (diphosphatidylglycerol) and glycerol. This is Cardiolipin synthase A from Pseudomonas putida (strain GB-1).